The chain runs to 578 residues: Proline--tRNA ligase (578 aa).

The protein belongs to the class-II aminoacyl-tRNA synthetase family. ProS type 1 subfamily. In terms of assembly, homodimer.

The protein resides in the cytoplasm. It catalyses the reaction tRNA(Pro) + L-proline + ATP = L-prolyl-tRNA(Pro) + AMP + diphosphate. Catalyzes the attachment of proline to tRNA(Pro) in a two-step reaction: proline is first activated by ATP to form Pro-AMP and then transferred to the acceptor end of tRNA(Pro). As ProRS can inadvertently accommodate and process non-cognate amino acids such as alanine and cysteine, to avoid such errors it has two additional distinct editing activities against alanine. One activity is designated as 'pretransfer' editing and involves the tRNA(Pro)-independent hydrolysis of activated Ala-AMP. The other activity is designated 'posttransfer' editing and involves deacylation of mischarged Ala-tRNA(Pro). The misacylated Cys-tRNA(Pro) is not edited by ProRS. This is Proline--tRNA ligase from Paraburkholderia phymatum (strain DSM 17167 / CIP 108236 / LMG 21445 / STM815) (Burkholderia phymatum).